A 294-amino-acid chain; its full sequence is Elongation factor Ts (294 aa).

The interval 81 to 84 is involved in Mg(2+) ion dislocation from EF-Tu; it reads TDFV.

The protein belongs to the EF-Ts family.

It is found in the cytoplasm. Functionally, associates with the EF-Tu.GDP complex and induces the exchange of GDP to GTP. It remains bound to the aminoacyl-tRNA.EF-Tu.GTP complex up to the GTP hydrolysis stage on the ribosome. The sequence is that of Elongation factor Ts from Levilactobacillus brevis (strain ATCC 367 / BCRC 12310 / CIP 105137 / JCM 1170 / LMG 11437 / NCIMB 947 / NCTC 947) (Lactobacillus brevis).